A 304-amino-acid chain; its full sequence is Acetaldehyde dehydrogenase 4 (304 aa).

The active-site Acyl-thioester intermediate is Cys-131. Residues 162–170 and Asn-273 contribute to the NAD(+) site; that span reads SAGPGTRKN.

The protein belongs to the acetaldehyde dehydrogenase family. Heterotetramer composed of two BphI (aldolase) and two BphJ (dehydrogenase).

It carries out the reaction acetaldehyde + NAD(+) + CoA = acetyl-CoA + NADH + H(+). The enzyme catalyses propanal + NAD(+) + CoA = propanoyl-CoA + NADH + H(+). Its pathway is xenobiotic degradation; polychlorinated biphenyl degradation. Bound pyruvate or other intermediates in the aldol addition reaction catalyzed by BphI allosterically activates BphJ reductive deacylation activity. Catalyzes the conversion of acetaldehyde or propanal to acetyl-CoA or propanoyl-CoA, respectively, using NAD(+) and coenzyme A. Displays broad specificity since it can utilize aliphatic aldehydes from two to five carbons in length as substrates; the aldehyde substrates can be directly channeled from the aldolase BphI to the dehydrogenase BphJ. Is the final enzyme in the meta-cleavage pathway for the degradation of polychlorinated biphenyls (PCBs). Is also able to utilize NADP(+) instead of NAD(+). Is not active with succinic semialdehyde or picolinaldehyde as substrates. Can also catalyze the reverse reaction, i.e. the reductive deacylation of acetyl-CoA to acetaldehyde, which is then channeled to the BphI active site. The BphI-BphJ enzyme complex exhibits unique bidirectionality in substrate channeling and allosteric activation. The protein is Acetaldehyde dehydrogenase 4 (bphJ) of Paraburkholderia xenovorans (strain LB400).